Here is a 380-residue protein sequence, read N- to C-terminus: Alpha-glucoside transport system permease protein AglG (380 aa).

A run of 6 helical transmembrane segments spans residues 13-33 (VHLSVLLLVLLWTLPTAGLLI), 179-199 (VIPILIAAFAAYALAWMPFPG), 202-222 (VLLAVVVGLLVVPLQMSLIPL), 239-259 (TYMGIWLAHTGFGLPLAIYLL), 288-308 (IILPLSFPALASFAIFQFLWT), and 344-364 (EILTASAFITIVVPLIVFFAL). Residues 167-364 (FLNSLTVAVP…VVPLIVFFAL (198 aa)) enclose the ABC transmembrane type-1 domain.

Belongs to the binding-protein-dependent transport system permease family. MalFG subfamily.

The protein localises to the cell inner membrane. Its function is as follows. Part of the binding-protein-dependent transport system for alpha-glucosides such as sucrose, maltose and trehalose. Probably responsible for the translocation of the substrate across the membrane. This is Alpha-glucoside transport system permease protein AglG (aglG) from Rhizobium meliloti (strain 1021) (Ensifer meliloti).